The primary structure comprises 348 residues: Phosphoribosylformylglycinamidine cyclo-ligase (348 aa).

The protein belongs to the AIR synthase family.

It is found in the cytoplasm. The catalysed reaction is 2-formamido-N(1)-(5-O-phospho-beta-D-ribosyl)acetamidine + ATP = 5-amino-1-(5-phospho-beta-D-ribosyl)imidazole + ADP + phosphate + H(+). It participates in purine metabolism; IMP biosynthesis via de novo pathway; 5-amino-1-(5-phospho-D-ribosyl)imidazole from N(2)-formyl-N(1)-(5-phospho-D-ribosyl)glycinamide: step 2/2. This Cereibacter sphaeroides (strain KD131 / KCTC 12085) (Rhodobacter sphaeroides) protein is Phosphoribosylformylglycinamidine cyclo-ligase.